Consider the following 359-residue polypeptide: Peptide chain release factor 1 (359 aa).

The residue at position 238 (Gln238) is an N5-methylglutamine.

Belongs to the prokaryotic/mitochondrial release factor family. In terms of processing, methylated by PrmC. Methylation increases the termination efficiency of RF1.

The protein localises to the cytoplasm. Its function is as follows. Peptide chain release factor 1 directs the termination of translation in response to the peptide chain termination codons UAG and UAA. In Mycoplasmopsis pulmonis (strain UAB CTIP) (Mycoplasma pulmonis), this protein is Peptide chain release factor 1.